We begin with the raw amino-acid sequence, 290 residues long: Signal peptidase I (290 aa).

Residues Met-1–Ser-13 are Cytoplasmic-facing. Residues Trp-14–Ile-34 form a helical membrane-spanning segment. Residues Pro-35–His-290 are Extracellular-facing. Residues Ser-38 and Lys-106 contribute to the active site.

The protein belongs to the peptidase S26 family.

The protein resides in the cell membrane. The enzyme catalyses Cleavage of hydrophobic, N-terminal signal or leader sequences from secreted and periplasmic proteins.. In Helicobacter pylori (strain J99 / ATCC 700824) (Campylobacter pylori J99), this protein is Signal peptidase I (lepB).